The chain runs to 393 residues: CCA-adding enzyme (393 aa).

G27 and R30 together coordinate ATP. CTP contacts are provided by G27 and R30. Residues D40 and D42 each coordinate Mg(2+). ATP-binding residues include R111, D154, R157, R160, and R163. CTP-binding residues include R111, D154, R157, R160, and R163.

This sequence belongs to the tRNA nucleotidyltransferase/poly(A) polymerase family. Bacterial CCA-adding enzyme type 3 subfamily. In terms of assembly, homodimer. Mg(2+) is required as a cofactor.

It catalyses the reaction a tRNA precursor + 2 CTP + ATP = a tRNA with a 3' CCA end + 3 diphosphate. The enzyme catalyses a tRNA with a 3' CCA end + 2 CTP + ATP = a tRNA with a 3' CCACCA end + 3 diphosphate. In terms of biological role, catalyzes the addition and repair of the essential 3'-terminal CCA sequence in tRNAs without using a nucleic acid template. Adds these three nucleotides in the order of C, C, and A to the tRNA nucleotide-73, using CTP and ATP as substrates and producing inorganic pyrophosphate. tRNA 3'-terminal CCA addition is required both for tRNA processing and repair. Also involved in tRNA surveillance by mediating tandem CCA addition to generate a CCACCA at the 3' terminus of unstable tRNAs. While stable tRNAs receive only 3'-terminal CCA, unstable tRNAs are marked with CCACCA and rapidly degraded. The protein is CCA-adding enzyme of Listeria monocytogenes serovar 1/2a (strain ATCC BAA-679 / EGD-e).